A 366-amino-acid chain; its full sequence is 4-hydroxy-3-methylbut-2-en-1-yl diphosphate synthase (flavodoxin) (366 aa).

[4Fe-4S] cluster contacts are provided by C270, C273, C305, and E312.

The protein belongs to the IspG family. [4Fe-4S] cluster is required as a cofactor.

It catalyses the reaction (2E)-4-hydroxy-3-methylbut-2-enyl diphosphate + oxidized [flavodoxin] + H2O + 2 H(+) = 2-C-methyl-D-erythritol 2,4-cyclic diphosphate + reduced [flavodoxin]. The protein operates within isoprenoid biosynthesis; isopentenyl diphosphate biosynthesis via DXP pathway; isopentenyl diphosphate from 1-deoxy-D-xylulose 5-phosphate: step 5/6. Converts 2C-methyl-D-erythritol 2,4-cyclodiphosphate (ME-2,4cPP) into 1-hydroxy-2-methyl-2-(E)-butenyl 4-diphosphate. The protein is 4-hydroxy-3-methylbut-2-en-1-yl diphosphate synthase (flavodoxin) of Acidithiobacillus ferrooxidans (strain ATCC 53993 / BNL-5-31) (Leptospirillum ferrooxidans (ATCC 53993)).